The sequence spans 540 residues: Chaperonin GroEL (540 aa).

ATP is bound by residues 29–32, 86–90, Gly413, 476–478, and Asp492; these read TLGP, DGTTT, and NAA.

The protein belongs to the chaperonin (HSP60) family. As to quaternary structure, forms a cylinder of 14 subunits composed of two heptameric rings stacked back-to-back. Interacts with the co-chaperonin GroES.

It localises to the cytoplasm. It carries out the reaction ATP + H2O + a folded polypeptide = ADP + phosphate + an unfolded polypeptide.. In terms of biological role, together with its co-chaperonin GroES, plays an essential role in assisting protein folding. The GroEL-GroES system forms a nano-cage that allows encapsulation of the non-native substrate proteins and provides a physical environment optimized to promote and accelerate protein folding. The polypeptide is Chaperonin GroEL (Streptococcus constellatus).